The sequence spans 326 residues: uncharacterized protein (326 aa).

Residue 28–35 participates in ATP binding; that stretch reads GPINSGKT.

It belongs to the archaeal ATPase family.

This is an uncharacterized protein from Pyrococcus abyssi (strain GE5 / Orsay).